The sequence spans 450 residues: Chromosomal replication initiator protein DnaA (450 aa).

Positions Met1 to Leu84 are domain I, interacts with DnaA modulators. Positions Leu84 to Ser109 are domain II. The interval Asp110 to Ala328 is domain III, AAA+ region. The ATP site is built by Gly154, Gly156, Lys157, and Thr158. Residues Asn329–Lys450 are domain IV, binds dsDNA.

The protein belongs to the DnaA family. As to quaternary structure, oligomerizes as a right-handed, spiral filament on DNA at oriC.

It is found in the cytoplasm. Plays an essential role in the initiation and regulation of chromosomal replication. ATP-DnaA binds to the origin of replication (oriC) to initiate formation of the DNA replication initiation complex once per cell cycle. Binds the DnaA box (a 9 base pair repeat at the origin) and separates the double-stranded (ds)DNA. Forms a right-handed helical filament on oriC DNA; dsDNA binds to the exterior of the filament while single-stranded (ss)DNA is stabiized in the filament's interior. The ATP-DnaA-oriC complex binds and stabilizes one strand of the AT-rich DNA unwinding element (DUE), permitting loading of DNA polymerase. After initiation quickly degrades to an ADP-DnaA complex that is not apt for DNA replication. Binds acidic phospholipids. The chain is Chromosomal replication initiator protein DnaA from Streptococcus equi subsp. zooepidemicus (strain H70).